Here is a 269-residue protein sequence, read N- to C-terminus: Ribosomal RNA small subunit methyltransferase J (269 aa).

S-adenosyl-L-methionine contacts are provided by residues 125 to 126 and D179; that span reads ER.

Belongs to the methyltransferase superfamily. RsmJ family.

The protein localises to the cytoplasm. It catalyses the reaction guanosine(1516) in 16S rRNA + S-adenosyl-L-methionine = N(2)-methylguanosine(1516) in 16S rRNA + S-adenosyl-L-homocysteine + H(+). Its function is as follows. Specifically methylates the guanosine in position 1516 of 16S rRNA. The protein is Ribosomal RNA small subunit methyltransferase J of Pseudomonas syringae pv. syringae (strain B728a).